A 149-amino-acid polypeptide reads, in one-letter code: D-aminoacyl-tRNA deacylase (149 aa).

The Gly-cisPro motif, important for rejection of L-amino acids motif lies at 139–140 (GP).

It belongs to the DTD family. Homodimer.

It is found in the cytoplasm. The enzyme catalyses glycyl-tRNA(Ala) + H2O = tRNA(Ala) + glycine + H(+). The catalysed reaction is a D-aminoacyl-tRNA + H2O = a tRNA + a D-alpha-amino acid + H(+). An aminoacyl-tRNA editing enzyme that deacylates mischarged D-aminoacyl-tRNAs. Also deacylates mischarged glycyl-tRNA(Ala), protecting cells against glycine mischarging by AlaRS. Acts via tRNA-based rather than protein-based catalysis; rejects L-amino acids rather than detecting D-amino acids in the active site. By recycling D-aminoacyl-tRNA to D-amino acids and free tRNA molecules, this enzyme counteracts the toxicity associated with the formation of D-aminoacyl-tRNA entities in vivo and helps enforce protein L-homochirality. This Schizosaccharomyces pombe (strain 972 / ATCC 24843) (Fission yeast) protein is D-aminoacyl-tRNA deacylase (dtd1).